Reading from the N-terminus, the 134-residue chain is Profilin-1 (134 aa).

A disulfide bridge links Cys13 with Cys118. Residues 84 to 100 (AVIRGKKGSGGITIKKT) carry the Involved in PIP2 interaction motif. Thr114 is modified (phosphothreonine).

It belongs to the profilin family. Occurs in many kinds of cells as a complex with monomeric actin in a 1:1 ratio. In terms of processing, phosphorylated by MAP kinases.

It is found in the cytoplasm. It localises to the cytoskeleton. Binds to actin and affects the structure of the cytoskeleton. At high concentrations, profilin prevents the polymerization of actin, whereas it enhances it at low concentrations. The polypeptide is Profilin-1 (Olea europaea (Common olive)).